The following is a 110-amino-acid chain: YGGLGYGGLGYGGLGYGGLGGGCGRGFSGGGLPVATASAAPTGLGVASENRYEGTVGVSGNLPFLGTADVAGEFPTAGIGEIFYGCGNGDVGITREGGLGYGAGYGGGYG.

4 repeat units span residues Tyr1 to Leu4, Gly5 to Leu9, Gly10 to Leu14, and Gly15 to Leu19. Residues Tyr1 to Leu19 form a 4 X 5 AA tandem repeats of G-Y-G-G-L region. Positions Tyr1–Phe27 are left arm. Positions Ser28–Glu96 are central domain. Residues Gly97–Gly110 are right arm (Gly-rich tandem repeats).

Belongs to the chorion protein family.

Its function is as follows. This protein is one of many from the eggshell of the silk moth. This is Chorion class B protein M2410 from Bombyx mori (Silk moth).